Here is an 84-residue protein sequence, read N- to C-terminus: Beta-defensin 119 (84 aa).

A signal peptide spans 1 to 21; sequence MKLLYLFLAILLAIEEPVISG. Cystine bridges form between C35/C49 and C39/C56.

The protein belongs to the beta-defensin family.

Its subcellular location is the secreted. Has antibacterial activity. The polypeptide is Beta-defensin 119 (DEFB119) (Pan troglodytes (Chimpanzee)).